The chain runs to 181 residues: MTIEVLKERIPDFAKDVRLNLSSMASDETLGEQTKYGLLVATAIATRNVEVIAAIEAEAAGKLSPAALGAAKSAAAIMAMNNVYYRFVHLASNKDYATMPARLRMNVIANPGVDKADFELWSLAVSAINGCGMCIDSHEKVLLQAGVSTAAIQTAVRFAAIMQSVAVSIEAGAASLAVAAE.

The active-site Proton donor is the cysteine 131. Cysteine 131 and cysteine 134 are oxidised to a cystine. Cysteine 134 (cysteine sulfenic acid (-SOH) intermediate) is an active-site residue.

It belongs to the AhpD family.

It catalyses the reaction N(6)-[(R)-dihydrolipoyl]-L-lysyl-[lipoyl-carrier protein] + a hydroperoxide = N(6)-[(R)-lipoyl]-L-lysyl-[lipoyl-carrier protein] + an alcohol + H2O. Antioxidant protein with alkyl hydroperoxidase activity. Required for the reduction of the AhpC active site cysteine residues and for the regeneration of the AhpC enzyme activity. The polypeptide is Alkyl hydroperoxide reductase AhpD (Rhodopseudomonas palustris (strain BisA53)).